Reading from the N-terminus, the 511-residue chain is MIEVVLNPGEVSLSDWKAVYRGAPARLNESAGPVIAQSAAAVERILAKGAPVYGINTGFGKLASVRIGDADLETLQRNIVLSHAAGTGAPSPVAVIRLMMALKLASLAQGASGVRPATTDLLEAMIVKGLTPVVPCQGSVGASGDLAPLAHMAATMIGVGEIFVEGQRLPAVQALMEAGLKPLTLGPKEGLALLNGTQFSTANALAALFDAERLFQSALVTGALATEAAKGSDTPFDPRIHTLRRQPGQIETAAALRALMAGSAIRDSHREGDTRVQDPYCLRCQPQVMGAALDILRQAAVTLSTEANGVSDNPLIFPDTDEALSGGNFHAEPVAFAADIIALAVCEIGSIAERRIAMLVDPACSGLPAFLTPKPGLNSGFMIPQVTAAALVSENKQKAYPASVDSIPTSANQEDHVSMAAHGARRLLAMVEAAEAVIGIELLAAVQGCDFHAPLASSPALESVRGLLRAQVPHLSDDRHFHPDMEAANALVRSGAVVAAASSVELPGVEG.

A cross-link (5-imidazolinone (Ala-Gly)) is located at residues 142–144 (ASG). At S143 the chain carries 2,3-didehydroalanine (Ser).

This sequence belongs to the PAL/histidase family. In terms of processing, contains an active site 4-methylidene-imidazol-5-one (MIO), which is formed autocatalytically by cyclization and dehydration of residues Ala-Ser-Gly.

Its subcellular location is the cytoplasm. It catalyses the reaction L-histidine = trans-urocanate + NH4(+). It functions in the pathway amino-acid degradation; L-histidine degradation into L-glutamate; N-formimidoyl-L-glutamate from L-histidine: step 1/3. This chain is Histidine ammonia-lyase, found in Caulobacter sp. (strain K31).